The sequence spans 96 residues: Co-chaperonin GroES (96 aa).

The protein belongs to the GroES chaperonin family. Heptamer of 7 subunits arranged in a ring. Interacts with the chaperonin GroEL.

The protein resides in the cytoplasm. Its function is as follows. Together with the chaperonin GroEL, plays an essential role in assisting protein folding. The GroEL-GroES system forms a nano-cage that allows encapsulation of the non-native substrate proteins and provides a physical environment optimized to promote and accelerate protein folding. GroES binds to the apical surface of the GroEL ring, thereby capping the opening of the GroEL channel. This chain is Co-chaperonin GroES, found in Neisseria gonorrhoeae (strain ATCC 700825 / FA 1090).